We begin with the raw amino-acid sequence, 87 residues long: Small ribosomal subunit protein bS20 (87 aa).

The disordered stretch occupies residues 1–22 (MANSPQAKKRARQNEKRFAINK).

The protein belongs to the bacterial ribosomal protein bS20 family.

Functionally, binds directly to 16S ribosomal RNA. This Ruegeria sp. (strain TM1040) (Silicibacter sp.) protein is Small ribosomal subunit protein bS20.